We begin with the raw amino-acid sequence, 328 residues long: Phosphate acyltransferase (328 aa).

It belongs to the PlsX family. As to quaternary structure, homodimer. Probably interacts with PlsY.

It is found in the cytoplasm. The catalysed reaction is a fatty acyl-[ACP] + phosphate = an acyl phosphate + holo-[ACP]. The protein operates within lipid metabolism; phospholipid metabolism. Functionally, catalyzes the reversible formation of acyl-phosphate (acyl-PO(4)) from acyl-[acyl-carrier-protein] (acyl-ACP). This enzyme utilizes acyl-ACP as fatty acyl donor, but not acyl-CoA. In Geobacillus thermodenitrificans (strain NG80-2), this protein is Phosphate acyltransferase.